Reading from the N-terminus, the 291-residue chain is ATP synthase gamma chain (291 aa).

The protein belongs to the ATPase gamma chain family. In terms of assembly, F-type ATPases have 2 components, CF(1) - the catalytic core - and CF(0) - the membrane proton channel. CF(1) has five subunits: alpha(3), beta(3), gamma(1), delta(1), epsilon(1). CF(0) has three main subunits: a, b and c.

Its subcellular location is the cell inner membrane. Functionally, produces ATP from ADP in the presence of a proton gradient across the membrane. The gamma chain is believed to be important in regulating ATPase activity and the flow of protons through the CF(0) complex. The chain is ATP synthase gamma chain from Roseobacter denitrificans (strain ATCC 33942 / OCh 114) (Erythrobacter sp. (strain OCh 114)).